Here is a 251-residue protein sequence, read N- to C-terminus: DNA repair protein RecO (251 aa).

This sequence belongs to the RecO family.

Involved in DNA repair and RecF pathway recombination. In Acetivibrio thermocellus (strain ATCC 27405 / DSM 1237 / JCM 9322 / NBRC 103400 / NCIMB 10682 / NRRL B-4536 / VPI 7372) (Clostridium thermocellum), this protein is DNA repair protein RecO.